We begin with the raw amino-acid sequence, 307 residues long: Transcription initiation factor IIB (307 aa).

Residues 11–42 (FTEECPACGSAEIVFDEERGEYVCANCGLVTE) form a TFIIB-type zinc finger. Positions 15, 18, 34, and 37 each coordinate Zn(2+). A disordered region spans residues 48–69 (PGPEWRHFNPDQRQRRSRTGEP). The span at 50–69 (PEWRHFNPDQRQRRSRTGEP) shows a compositional bias: basic and acidic residues. Tandem repeats lie at residues 123–207 (LELE…QRRL) and 218–299 (DHLP…EICE).

This sequence belongs to the TFIIB family.

In terms of biological role, stabilizes TBP binding to an archaeal box-A promoter. Also responsible for recruiting RNA polymerase II to the pre-initiation complex (DNA-TBP-TFIIB). In Methanopyrus kandleri (strain AV19 / DSM 6324 / JCM 9639 / NBRC 100938), this protein is Transcription initiation factor IIB.